A 120-amino-acid polypeptide reads, in one-letter code: Spermidine export protein MdtJ (120 aa).

The next 4 helical transmembrane spans lie at 1 to 21 (MFYW…TLSM), 31 to 51 (AGYI…SFAV), 54 to 74 (IALG…ITVF), and 81 to 101 (EVLS…IVLI).

The protein belongs to the drug/metabolite transporter (DMT) superfamily. Small multidrug resistance (SMR) (TC 2.A.7.1) family. MdtJ subfamily. As to quaternary structure, forms a complex with MdtI.

It is found in the cell inner membrane. Functionally, catalyzes the excretion of spermidine. The chain is Spermidine export protein MdtJ from Salmonella arizonae (strain ATCC BAA-731 / CDC346-86 / RSK2980).